A 481-amino-acid chain; its full sequence is ATP synthase subunit beta, chloroplastic (481 aa).

161 to 168 (GGAGVGKT) contacts ATP.

This sequence belongs to the ATPase alpha/beta chains family. As to quaternary structure, F-type ATPases have 2 components, CF(1) - the catalytic core - and CF(0) - the membrane proton channel. CF(1) has five subunits: alpha(3), beta(3), gamma(1), delta(1), epsilon(1). CF(0) has four main subunits: a(1), b(1), b'(1) and c(9-12).

Its subcellular location is the plastid. The protein resides in the chloroplast thylakoid membrane. It catalyses the reaction ATP + H2O + 4 H(+)(in) = ADP + phosphate + 5 H(+)(out). Functionally, produces ATP from ADP in the presence of a proton gradient across the membrane. The catalytic sites are hosted primarily by the beta subunits. The chain is ATP synthase subunit beta, chloroplastic from Pylaiella littoralis (Seaweed).